A 738-amino-acid polypeptide reads, in one-letter code: YTH domain-containing protein 1 (738 aa).

The span at 1–12 shows a compositional bias: basic and acidic residues; it reads MAADSREEKDGE. The disordered stretch occupies residues 1–341; the sequence is MAADSREEKD…KHEKLSSSVR (341 aa). Serine 35 bears the Phosphoserine mark. The segment covering 50-59 has biased composition (basic and acidic residues); that stretch reads ERMESIDTKR. Polar residues predominate over residues 63–90; it reads SIHSRQLISKPLSSSVSNNKRIVSTKGK. Residues 91 to 115 are compositionally biased toward basic and acidic residues; sequence SVTEYKNEEYQRSERNKRLDADRKI. A Glycyl lysine isopeptide (Lys-Gly) (interchain with G-Cter in SUMO2) cross-link involves residue lysine 96. A phosphoserine mark is found at serine 118 and serine 120. The span at 124–144 shows a compositional bias: basic and acidic residues; sequence EPYKSQPEKPCLRKRDSERRA. Serine 146 is subject to Phosphoserine. Phosphothreonine is present on threonine 148. 2 stretches are compositionally biased toward basic and acidic residues: residues 151–163 and 170–185; these read GSER…DRRA and SKEE…DHET. The span at 186 to 197 shows a compositional bias: polar residues; it reads GSSASSEQGNNT. The span at 198–257 shows a compositional bias: acidic residues; sequence ENEEEGGEEDVEEDEEVDEDGDDDEEVDEDAEEEEDEEEDEEEEDEEEEEEEEEEYEQDE. Residues 258 to 273 show a composition bias toward basic and acidic residues; it reads RDQKEEGNDYDTRSEA. Over residues 283–292 the composition is skewed to polar residues; it reads FTDGSVRSGS. A phosphoserine mark is found at serine 311, serine 318, serine 320, serine 321, and serine 323. Residues 318 to 328 show a composition bias toward low complexity; the sequence is SGSSASESYAG. The YTH domain maps to 358-495; it reads ARFFLIKSNN…ECGTQLCLLF (138 aa). RNA is bound by residues 364–366 and tryptophan 380; that span reads KSN. Serine 427 is modified (phosphoserine). Tryptophan 431 is a binding site for RNA. Serine 438 carries the phosphoserine modification. Aspartate 479 is an RNA binding site. Positions 512 to 526 are enriched in basic residues; it reads HKRRMHSQPRSRGRP. Disordered stretches follow at residues 512–566, 618–654, and 680–738; these read HKRR…RPGY, GMPP…HPVP, and AVVS…RYRR. Over residues 527-566 the composition is skewed to basic and acidic residues; that stretch reads SRREPVRDVGRRRPEDYDIHNSRKKPRIDYPPEFHQRPGY. Serine 548 is modified (phosphoserine). Residues 690 to 738 are compositionally biased toward basic and acidic residues; it reads RERDRERERDRPRDNRRDRERDRGRDRERERERICDRDRDRGERGRYRR.

As to quaternary structure, interacts with SRSF1. Interacts with SRSF2. Interacts with SRSF3. Interacts with SRSF7. Interacts with SRSF10. Interacts with CPSF6. Interacts with KHDRBS1/SAM68. Interacts with TRA2B. Interacts with KHDRBS3. Interacts with EMD. Interacts with RBMX. Interacts with ZCCHC8. Tyrosine phosphorylated. In terms of tissue distribution, ubiquitous.

It is found in the nucleus. It localises to the nucleus speckle. Functionally, regulator of alternative splicing that specifically recognizes and binds N6-methyladenosine (m6A)-containing RNAs. M6A is a modification present at internal sites of mRNAs and some non-coding RNAs and plays a role in the efficiency of mRNA splicing, processing and stability. Acts as a key regulator of exon-inclusion or exon-skipping during alternative splicing via interaction with mRNA splicing factors SRSF3 and SRSF10. Specifically binds m6A-containing mRNAs and promotes recruitment of SRSF3 to its mRNA-binding elements adjacent to m6A sites, leading to exon-inclusion during alternative splicing. In contrast, interaction with SRSF3 prevents interaction with SRSF10, a splicing factor that promotes exon skipping: this prevents SRSF10 from binding to its mRNA-binding sites close to m6A-containing regions, leading to inhibit exon skipping during alternative splicing. May also regulate alternative splice site selection. Also involved in nuclear export of m6A-containing mRNAs via interaction with SRSF3: interaction with SRSF3 facilitates m6A-containing mRNA-binding to both SRSF3 and NXF1, promoting mRNA nuclear export. Involved in S-adenosyl-L-methionine homeostasis by regulating expression of MAT2A transcripts, probably by binding m6A-containing MAT2A mRNAs. Also recognizes and binds m6A on other RNA molecules. Involved in random X inactivation mediated by Xist RNA: recognizes and binds m6A-containing Xist and promotes transcription repression activity of Xist. Also recognizes and binds m6A-containing single-stranded DNA. Involved in germline development: required for spermatogonial development in males and oocyte growth and maturation in females, probably via its role in alternative splicing. The chain is YTH domain-containing protein 1 (Ythdc1) from Rattus norvegicus (Rat).